The chain runs to 479 residues: Adenylate kinase 8 (479 aa).

2 adenylate kinase regions span residues 58 to 258 (PRIV…TYVQ) and 269 to 471 (PRVL…SGII). An ATP-binding site is contributed by 67-72 (ASGKTT). The tract at residues 87 to 113 (TLENLILNEFSYTATEARRLYLQRKTV) is NMP 1. Residues 140–143 (GIPE), Gln-147, and Arg-203 contribute to the AMP site. The tract at residues 177–206 (GKRIDPQTGEIYHTTFDWPPESEIQNRLMV) is LID 1. 278–283 (GSGKSL) contributes to the ATP binding site. Positions 298 to 327 (CCGQLLKEAVADRTTFGELIQPFFEKEMAV) are NMP 2. Residues 325–327 (MAV), 354–357 (GVPR), and Gln-361 each bind AMP. Positions 391 to 424 (LRRIDPVTGERYHLMYKPPPTMEIQARLLQNPKD) are LID 2. Arg-392 serves as a coordination point for ATP.

Belongs to the adenylate kinase family. In terms of assembly, interacts with CFAP45 and CFAP52; CFAP45 and AK8 dimerization may create a cavity at the interface of the dimer that can accommodate AMP. Expressed in respiratory cells (at protein level).

It is found in the cytoplasm. The protein localises to the cytosol. Its subcellular location is the cytoskeleton. It localises to the cilium axoneme. It carries out the reaction AMP + ATP = 2 ADP. The catalysed reaction is a 2'-deoxyribonucleoside 5'-diphosphate + ATP = a 2'-deoxyribonucleoside 5'-triphosphate + ADP. The enzyme catalyses a ribonucleoside 5'-diphosphate + ATP = a ribonucleoside 5'-triphosphate + ADP. In terms of biological role, nucleoside monophosphate (NMP) kinase that catalyzes the reversible transfer of the terminal phosphate group between nucleoside triphosphates and monophosphates. Has highest activity toward AMP, and weaker activity toward dAMP, CMP and dCMP. Also displays broad nucleoside diphosphate kinase activity. The sequence is that of Adenylate kinase 8 (AK8) from Homo sapiens (Human).